Here is a 521-residue protein sequence, read N- to C-terminus: Protein DETOXIFICATION 44, chloroplastic (521 aa).

The transit peptide at 1–31 (MAAVATSFCFSPHRSPSRFGNPNSSIRRTIV) directs the protein to the chloroplast. The disordered stretch occupies residues 12 to 73 (PHRSPSRFGN…DHDHKPDPGI (62 aa)). Polar residues-rich tracts occupy residues 18-27 (RFGNPNSSIR) and 42-61 (AVST…TSQN). A run of 12 helical transmembrane segments spans residues 80–100 (IMSI…TSLV), 103–123 (AFVG…VSVF), 167–187 (VSTS…ALSL), 213–235 (RLRA…FRGF), 242–262 (LYAV…LIFV), 268–288 (SGAA…LLWK), 314–334 (LLIG…SLAA), 345–365 (QIVL…AIAA), 385–405 (LFGV…VLFI), 423–443 (IALS…LAFV), 454–474 (FGFA…FMLV), and 481–503 (LAGI…AWRL).

This sequence belongs to the multi antimicrobial extrusion (MATE) (TC 2.A.66.1) family. As to expression, expressed in shoots.

The protein localises to the plastid. The protein resides in the chloroplast membrane. This Arabidopsis thaliana (Mouse-ear cress) protein is Protein DETOXIFICATION 44, chloroplastic.